The following is a 372-amino-acid chain: Queuine tRNA-ribosyltransferase (372 aa).

The Proton acceptor role is filled by Asp89. Substrate contacts are provided by residues 89–93, Asp161, and Gly232; that span reads DSGGF. Residues 262–268 are RNA binding; the sequence is GIGDLPS. Asp281 serves as the catalytic Nucleophile. An RNA binding; important for wobble base 34 recognition region spans residues 286-290; that stretch reads TKAAR. The Zn(2+) site is built by Cys319, Cys321, Cys324, and His351.

This sequence belongs to the queuine tRNA-ribosyltransferase family. In terms of assembly, homodimer. Within each dimer, one monomer is responsible for RNA recognition and catalysis, while the other monomer binds to the replacement base PreQ1. Zn(2+) serves as cofactor.

The enzyme catalyses 7-aminomethyl-7-carbaguanine + guanosine(34) in tRNA = 7-aminomethyl-7-carbaguanosine(34) in tRNA + guanine. Its pathway is tRNA modification; tRNA-queuosine biosynthesis. Functionally, catalyzes the base-exchange of a guanine (G) residue with the queuine precursor 7-aminomethyl-7-deazaguanine (PreQ1) at position 34 (anticodon wobble position) in tRNAs with GU(N) anticodons (tRNA-Asp, -Asn, -His and -Tyr). Catalysis occurs through a double-displacement mechanism. The nucleophile active site attacks the C1' of nucleotide 34 to detach the guanine base from the RNA, forming a covalent enzyme-RNA intermediate. The proton acceptor active site deprotonates the incoming PreQ1, allowing a nucleophilic attack on the C1' of the ribose to form the product. After dissociation, two additional enzymatic reactions on the tRNA convert PreQ1 to queuine (Q), resulting in the hypermodified nucleoside queuosine (7-(((4,5-cis-dihydroxy-2-cyclopenten-1-yl)amino)methyl)-7-deazaguanosine). In Chlamydia felis (strain Fe/C-56) (Chlamydophila felis), this protein is Queuine tRNA-ribosyltransferase.